Consider the following 433-residue polypeptide: UDP-N-acetylglucosamine 1-carboxyvinyltransferase 2 (433 aa).

23–24 (KN) contacts phosphoenolpyruvate. Residue Arg96 coordinates UDP-N-acetyl-alpha-D-glucosamine. Cys120 serves as the catalytic Proton donor. Cys120 is modified (2-(S-cysteinyl)pyruvic acid O-phosphothioketal). Residues 125–129 (RPIDL), Asp308, and Val330 contribute to the UDP-N-acetyl-alpha-D-glucosamine site.

The protein belongs to the EPSP synthase family. MurA subfamily.

It is found in the cytoplasm. The catalysed reaction is phosphoenolpyruvate + UDP-N-acetyl-alpha-D-glucosamine = UDP-N-acetyl-3-O-(1-carboxyvinyl)-alpha-D-glucosamine + phosphate. It functions in the pathway cell wall biogenesis; peptidoglycan biosynthesis. Its function is as follows. Cell wall formation. Adds enolpyruvyl to UDP-N-acetylglucosamine. This chain is UDP-N-acetylglucosamine 1-carboxyvinyltransferase 2, found in Enterococcus faecalis (strain ATCC 700802 / V583).